The chain runs to 488 residues: Protein DETOXIFICATION 35 (488 aa).

The next 12 helical transmembrane spans lie at 38-58 (LWMI…VSSV), 73-93 (AVSI…LGMG), 121-141 (IILF…TPVL), 150-170 (IAVP…SLAF), 187-207 (IAWI…LFII), 218-238 (LAFN…VIGW), 262-282 (IASA…IVLT), 296-316 (SICM…NAAI), 336-356 (VYVT…AIII), 379-401 (AYLL…VAVG), 408-428 (VAYI…YLLG), and 439-459 (WSGM…VLYK).

The protein belongs to the multi antimicrobial extrusion (MATE) (TC 2.A.66.1) family. As to expression, highly expressed in inflorescence tissues, especially in floral epidermal guard cells including those of the anthers, stigma, siliques and nectaries. Also detected in the meristematic zone of the root apex and in the elongation zone through to the fully expanded cells of the differentiation zone.

The protein resides in the vacuole membrane. Multidrug and toxin efflux transporter involved in flavonoid metabolism. Required for proper reproductive development. The sequence is that of Protein DETOXIFICATION 35 from Arabidopsis thaliana (Mouse-ear cress).